The chain runs to 513 residues: Serine/threonine-protein kinase ppk8 (513 aa).

Over residues 98-114 the composition is skewed to low complexity; sequence LSSTLTSMSEESSSTES. Residues 98 to 120 form a disordered region; that stretch reads LSSTLTSMSEESSSTESKFATLN. A Protein kinase domain is found at 241–505; the sequence is GKLNNVIGEG…ISGARSTTWM (265 aa). ATP contacts are provided by residues 247 to 255 and Lys-270; that span reads IGEGASSFI. Asp-364 acts as the Proton acceptor in catalysis.

Belongs to the protein kinase superfamily. Ser/Thr protein kinase family.

The protein localises to the cytoplasm. Its subcellular location is the nucleus. It carries out the reaction L-seryl-[protein] + ATP = O-phospho-L-seryl-[protein] + ADP + H(+). The catalysed reaction is L-threonyl-[protein] + ATP = O-phospho-L-threonyl-[protein] + ADP + H(+). In Schizosaccharomyces pombe (strain 972 / ATCC 24843) (Fission yeast), this protein is Serine/threonine-protein kinase ppk8 (ppk8).